The following is a 792-amino-acid chain: Chloride channel protein CLC-d (792 aa).

The next 12 helical transmembrane spans lie at 78-98 (FFSLLIGIGTGLAAVFINLSV), 119-139 (AGFIVYLLINLVLVFSSAYII), 170-190 (RTLIGKIFGSIGSVGGGLALG), 195-215 (LVHTGACIASLLGQGGSTKYH), 237-257 (GCAAGVAAAFRAPVGGVLFAL), 267-287 (QLMWRVFFTSAIVAVVVRTAM), 320-340 (LLPMAVIGVIGGLLGALFNQL), 361-381 (IIEACIISCITSAISFGLPLL), 451-471 (LLTFLAMFYTLAVVTFGTAVP), 474-494 (QFVPGIMIGSTYGRLVGMFVV), 508-528 (ALLGAASFLGGSMRMTVSLCV), and 529-549 (IMVEITNNLKLLPLIMLVLLI). CBS domains lie at 592–652 (QSQK…KVDF) and 704–761 (LNPS…SSAV). The chain crosses the membrane as a helical span at residues 731–751 (HLFVVPRPSRVIGLITRKDLL).

The protein belongs to the chloride channel (TC 2.A.49) family. In terms of assembly, homodimer. As to expression, broadly expressed in the plant, but predominantly in the silique.

Its subcellular location is the membrane. Voltage-gated chloride channel. This Arabidopsis thaliana (Mouse-ear cress) protein is Chloride channel protein CLC-d (CLC-D).